The chain runs to 430 residues: Enolase (430 aa).

(2R)-2-phosphoglycerate is bound at residue Gln-167. The active-site Proton donor is the Glu-209. 3 residues coordinate Mg(2+): Asp-246, Glu-289, and Asp-316. Residues Lys-341, Arg-370, Ser-371, and Lys-392 each coordinate (2R)-2-phosphoglycerate. Residue Lys-341 is the Proton acceptor of the active site.

It belongs to the enolase family. In terms of assembly, component of the RNA degradosome, a multiprotein complex involved in RNA processing and mRNA degradation. Requires Mg(2+) as cofactor.

The protein localises to the cytoplasm. The protein resides in the secreted. It localises to the cell surface. The enzyme catalyses (2R)-2-phosphoglycerate = phosphoenolpyruvate + H2O. The protein operates within carbohydrate degradation; glycolysis; pyruvate from D-glyceraldehyde 3-phosphate: step 4/5. Catalyzes the reversible conversion of 2-phosphoglycerate (2-PG) into phosphoenolpyruvate (PEP). It is essential for the degradation of carbohydrates via glycolysis. This chain is Enolase, found in Alteromonas mediterranea (strain DSM 17117 / CIP 110805 / LMG 28347 / Deep ecotype).